Consider the following 109-residue polypeptide: Large ribosomal subunit protein uL23 (109 aa).

Belongs to the universal ribosomal protein uL23 family. In terms of assembly, part of the 50S ribosomal subunit. Contacts protein L29, and trigger factor when it is bound to the ribosome.

Functionally, one of the early assembly proteins it binds 23S rRNA. One of the proteins that surrounds the polypeptide exit tunnel on the outside of the ribosome. Forms the main docking site for trigger factor binding to the ribosome. The protein is Large ribosomal subunit protein uL23 of Prosthecochloris aestuarii (strain DSM 271 / SK 413).